The chain runs to 213 residues: UPF0111 protein TM_0914 (213 aa).

Belongs to the UPF0111 family.

This Thermotoga maritima (strain ATCC 43589 / DSM 3109 / JCM 10099 / NBRC 100826 / MSB8) protein is UPF0111 protein TM_0914.